Reading from the N-terminus, the 113-residue chain is Iron-sulfur cluster insertion protein ErpA (113 aa).

Iron-sulfur cluster-binding residues include cysteine 41, cysteine 105, and cysteine 107.

Belongs to the HesB/IscA family. In terms of assembly, homodimer. Iron-sulfur cluster is required as a cofactor.

Its function is as follows. Required for insertion of 4Fe-4S clusters for at least IspG. The chain is Iron-sulfur cluster insertion protein ErpA from Hydrogenovibrio crunogenus (strain DSM 25203 / XCL-2) (Thiomicrospira crunogena).